The following is a 166-amino-acid chain: Large ribosomal subunit protein uL10 (166 aa).

It belongs to the universal ribosomal protein uL10 family. Part of the ribosomal stalk of the 50S ribosomal subunit. The N-terminus interacts with L11 and the large rRNA to form the base of the stalk. The C-terminus forms an elongated spine to which L12 dimers bind in a sequential fashion forming a multimeric L10(L12)X complex.

Forms part of the ribosomal stalk, playing a central role in the interaction of the ribosome with GTP-bound translation factors. In Geobacillus sp. (strain WCH70), this protein is Large ribosomal subunit protein uL10.